Consider the following 196-residue polypeptide: ATP-dependent Clp protease proteolytic subunit (196 aa).

Residue serine 98 is the Nucleophile of the active site. Residue histidine 123 is part of the active site.

The protein belongs to the peptidase S14 family. In terms of assembly, fourteen ClpP subunits assemble into 2 heptameric rings which stack back to back to give a disk-like structure with a central cavity, resembling the structure of eukaryotic proteasomes.

The protein resides in the cytoplasm. It carries out the reaction Hydrolysis of proteins to small peptides in the presence of ATP and magnesium. alpha-casein is the usual test substrate. In the absence of ATP, only oligopeptides shorter than five residues are hydrolyzed (such as succinyl-Leu-Tyr-|-NHMec, and Leu-Tyr-Leu-|-Tyr-Trp, in which cleavage of the -Tyr-|-Leu- and -Tyr-|-Trp bonds also occurs).. Its function is as follows. Cleaves peptides in various proteins in a process that requires ATP hydrolysis. Has a chymotrypsin-like activity. Plays a major role in the degradation of misfolded proteins. This Sulfurimonas denitrificans (strain ATCC 33889 / DSM 1251) (Thiomicrospira denitrificans (strain ATCC 33889 / DSM 1251)) protein is ATP-dependent Clp protease proteolytic subunit.